A 477-amino-acid chain; its full sequence is MKDSLPAFEKAKVLVVGDVMLDRYWTGPTGRISPEAPVPVVRINQLEDRPGGAANVALNIATLGGQVSLAGIVGEDETAAALTTGIQALGVEPKWHVVADKPTITKLRVMSRSQQLIRLDFEEPYQQADSQALLDSAANSLADVDVVILSDYAKGALIEPLAFIQQAKSQGVKVLVDPKGSDFSKYRGATLLTPNLHEFELVAGAVTSEADLVEKAHKLLEEFDLEALLVTRSEQGMTLITAENKELHIPTVAREVHDVTGAGDTVISALATSLAAGSTMAEACAIANTAAGIVVAKLGTSTVSRIELIESLSDTHHSETGFGVVTEDQLMYALEQTRLRGERVVMTNGCFDILHAGHVSYLQEAQAQGDRLIVAVNDDDSVRRLKGDGRPVNPVGRRMAVLAGLASVDWVLPFSEDTPQRVIARLLPDLLVKGGDYKIEDIAGGKEVIAAGGLVKILCFEDGISTTKIIENIMANQ.

A ribokinase region spans residues 1 to 320; that stretch reads MKDSLPAFEK…SLSDTHHSET (320 aa). 195-198 lines the ATP pocket; sequence NLHE. D264 is a catalytic residue. The interval 346-477 is cytidylyltransferase; it reads MTNGCFDILH…KIIENIMANQ (132 aa).

The protein in the N-terminal section; belongs to the carbohydrate kinase PfkB family. This sequence in the C-terminal section; belongs to the cytidylyltransferase family. Homodimer.

The catalysed reaction is D-glycero-beta-D-manno-heptose 7-phosphate + ATP = D-glycero-beta-D-manno-heptose 1,7-bisphosphate + ADP + H(+). It carries out the reaction D-glycero-beta-D-manno-heptose 1-phosphate + ATP + H(+) = ADP-D-glycero-beta-D-manno-heptose + diphosphate. It participates in nucleotide-sugar biosynthesis; ADP-L-glycero-beta-D-manno-heptose biosynthesis; ADP-L-glycero-beta-D-manno-heptose from D-glycero-beta-D-manno-heptose 7-phosphate: step 1/4. It functions in the pathway nucleotide-sugar biosynthesis; ADP-L-glycero-beta-D-manno-heptose biosynthesis; ADP-L-glycero-beta-D-manno-heptose from D-glycero-beta-D-manno-heptose 7-phosphate: step 3/4. Catalyzes the phosphorylation of D-glycero-D-manno-heptose 7-phosphate at the C-1 position to selectively form D-glycero-beta-D-manno-heptose-1,7-bisphosphate. Functionally, catalyzes the ADP transfer from ATP to D-glycero-beta-D-manno-heptose 1-phosphate, yielding ADP-D-glycero-beta-D-manno-heptose. The protein is Bifunctional protein HldE of Shewanella piezotolerans (strain WP3 / JCM 13877).